The chain runs to 194 residues: Small ribosomal subunit protein uS7 (194 aa).

Belongs to the universal ribosomal protein uS7 family. As to quaternary structure, part of the 30S ribosomal subunit.

Functionally, one of the primary rRNA binding proteins, it binds directly to 16S rRNA where it nucleates assembly of the head domain of the 30S subunit. Is located at the subunit interface close to the decoding center. This chain is Small ribosomal subunit protein uS7, found in Archaeoglobus fulgidus (strain ATCC 49558 / DSM 4304 / JCM 9628 / NBRC 100126 / VC-16).